The sequence spans 637 residues: Protein arginine N-methyltransferase 5 (637 aa).

Alanine 2 carries the N-acetylalanine modification. A TIM barrel region spans residues arginine 13 to proline 292. The region spanning leucine 308–tryptophan 615 is the SAM-dependent MTase PRMT-type domain. Tyrosine 324 provides a ligand contact to S-adenosyl-L-methionine. Phenylalanine 327 serves as a coordination point for a protein. S-adenosyl-L-methionine contacts are provided by residues lysine 333–tyrosine 334, glutamate 392, and aspartate 419–methionine 420. A protein-binding residues include glutamate 435 and glutamate 444. Active-site proton donor/acceptor residues include glutamate 435 and glutamate 444. Positions proline 465–leucine 637 are beta barrel. Positions arginine 488–proline 494 are dimerization.

This sequence belongs to the class I-like SAM-binding methyltransferase superfamily. Protein arginine N-methyltransferase family. As to quaternary structure, forms, at least, homodimers and homotetramers. Component of the methylosome complex, composed of PRMT5, WDR77 and CLNS1A. Found in a complex composed of PRMT5, WDR77 and RIOK1. RIOK1 and CLNS1A associate with PRMT5 in a mutually exclusive fashion, which allows the recruitment of distinct methylation substrates, such as nucleolin/NCL and Sm proteins, respectively. Interacts with PRDM1. Identified in a complex composed of methylosome and PRMT1 and ERH. Interacts with EGFR; methylates EGFR and stimulates EGFR-mediated ERK activation. Interacts with HOXA9. Interacts with SRGAP2. Found in a complex with COPRS, RUNX1 and CBFB. Interacts with CHTOP; the interaction symmetrically methylates CHTOP, but seems to require the presence of PRMT1. Interacts with EPB41L3; this modulates methylation of target proteins. Component of a high molecular weight E2F-pocket protein complex, CERC (cyclin E1 repressor complex). Associates with SWI/SNF remodeling complexes containing SMARCA2 and SMARCA4. Interacts with JAK2, SSTR1, SUPT5H, BRAF and with active RAF1. Interacts with LSM11, PRMT7 and SNRPD3. Interacts with COPRS; promoting its recruitment on histone H4. Interacts with CLNS1A/pICln. Identified in a complex with CLNS1A/pICln and Sm proteins. Interacts with RPS10. Interacts with WDR77. Interacts with IWS1. Interacts with CRY1. Interacts with POLR2A. Interacts with SMN1/SMN2. Interacts with LYAR; this interaction is direct. Interacts with TTC5/STRAP; this interaction is DNA damage-dependent and promotes PRMT5 interaction with p53/TP53. Interacts with p53/TP53 in response to DNA damage; the interaction is TTC5/STRAP dependent. Interacts with FAM47E; the interaction is direct, promotes PRMT5 localization to chromatin, and does not disrupt its association with WDR77 or STUB1. Interacts with TDRD6. Interacts with STUB1. Interacts with MBD2. Does not interact with MBD3.

Its subcellular location is the cytoplasm. The protein resides in the nucleus. It localises to the golgi apparatus. It carries out the reaction L-arginyl-[protein] + 2 S-adenosyl-L-methionine = N(omega),N(omega)'-dimethyl-L-arginyl-[protein] + 2 S-adenosyl-L-homocysteine + 2 H(+). Activity is increased by EGF, HGF, FGF1 or FGF2 treatments, and slightly decreased by NGF treatment. Functionally, arginine methyltransferase that can both catalyze the formation of omega-N monomethylarginine (MMA) and symmetrical dimethylarginine (sDMA), with a preference for the formation of MMA. Specifically mediates the symmetrical dimethylation of arginine residues in the small nuclear ribonucleoproteins Sm D1 (SNRPD1) and Sm D3 (SNRPD3); such methylation being required for the assembly and biogenesis of snRNP core particles. Methylates SUPT5H and may regulate its transcriptional elongation properties. May methylate the N-terminal region of MBD2. Mono- and dimethylates arginine residues of myelin basic protein (MBP) in vitro. May play a role in cytokine-activated transduction pathways. Negatively regulates cyclin E1 promoter activity and cellular proliferation. Methylates histone H2A and H4 'Arg-3' during germ cell development. Methylates histone H3 'Arg-8', which may repress transcription. Methylates the Piwi proteins (PIWIL1, PIWIL2 and PIWIL4), methylation of Piwi proteins being required for the interaction with Tudor domain-containing proteins and subsequent localization to the meiotic nuage. Methylates RPS10. Attenuates EGF signaling through the MAPK1/MAPK3 pathway acting at 2 levels. First, monomethylates EGFR; this enhances EGFR 'Tyr-1197' phosphorylation and PTPN6 recruitment, eventually leading to reduced SOS1 phosphorylation. Second, methylates RAF1 and probably BRAF, hence destabilizing these 2 signaling proteins and reducing their catalytic activity. Required for induction of E-selectin and VCAM-1, on the endothelial cells surface at sites of inflammation. Methylates HOXA9. Methylates and regulates SRGAP2 which is involved in cell migration and differentiation. Acts as a transcriptional corepressor in CRY1-mediated repression of the core circadian component PER1 by regulating the H4R3 dimethylation at the PER1 promoter. Methylates GM130/GOLGA2, regulating Golgi ribbon formation. Methylates H4R3 in genes involved in glioblastomagenesis in a CHTOP- and/or TET1-dependent manner. Symmetrically methylates POLR2A, a modification that allows the recruitment to POLR2A of proteins including SMN1/SMN2 and SETX. This is required for resolving RNA-DNA hybrids created by RNA polymerase II, that form R-loop in transcription terminal regions, an important step in proper transcription termination. Along with LYAR, binds the promoter of gamma-globin HBG1/HBG2 and represses its expression. Symmetrically methylates NCL. Methylates p53/TP53; methylation might possibly affect p53/TP53 target gene specificity. Involved in spliceosome maturation and mRNA splicing in prophase I spermatocytes through the catalysis of the symmetrical arginine dimethylation of SNRPB (small nuclear ribonucleoprotein-associated protein) and the interaction with tudor domain-containing protein TDRD6. This is Protein arginine N-methyltransferase 5 (Prmt5) from Mus musculus (Mouse).